We begin with the raw amino-acid sequence, 498 residues long: MTELLKLSAAELGAAIASGETSAVEATQAYLDRIAEVDGQIHAFLHVAADKALEQARAVDARRAAGEKLGPLAGVPVAHKDVFTTKDMPTTAASKILEGWQSPYDATVTERLRDAGLVILGKTNLDEFAMGSSTENSAYGPTRNPWDTDRVPGGSSGGSSAAVAAFEAPLATGTDTGGSIRQPAAVCGLVGAKPTYGTSSRYGLIAFASSLDTPGPIARNVLDAALLHEAFSGHDPRDSTSVNEPVPPVVEAARRADVSGMRIGVVKELSGEGYQPGVMQRFTEAVELFESLGAKIVEVSCPSFTAALAAYYLIAPSECSSNLARFDAMRYGLRVGDDGTRSADEVMALTRAQGFGPEVKRRIILGTYALSSGYYDAYYGSAQKVRTLIKRDFEAAFQQADVLVSPTTPTTAFRLGERIDDPMAMYLADLCTIPTNLAGNAALSVPCGLAPEDNMPVGLHIMAPTLADDRAYQAGAAVEAALRDKWGGDLLSQCAYAV.

Residues Lys80 and Ser155 each act as charge relay system in the active site. Residues 132-159 form a disordered region; the sequence is SSTENSAYGPTRNPWDTDRVPGGSSGGS. The Acyl-ester intermediate role is filled by Ser179.

It belongs to the amidase family. GatA subfamily. In terms of assembly, heterotrimer of A, B and C subunits.

The catalysed reaction is L-glutamyl-tRNA(Gln) + L-glutamine + ATP + H2O = L-glutaminyl-tRNA(Gln) + L-glutamate + ADP + phosphate + H(+). Its function is as follows. Allows the formation of correctly charged Gln-tRNA(Gln) through the transamidation of misacylated Glu-tRNA(Gln) in organisms which lack glutaminyl-tRNA synthetase. The reaction takes place in the presence of glutamine and ATP through an activated gamma-phospho-Glu-tRNA(Gln). This is Glutamyl-tRNA(Gln) amidotransferase subunit A from Thermobifida fusca (strain YX).